Consider the following 489-residue polypeptide: Probable guanine deaminase (489 aa).

Zn(2+)-binding residues include His-100 and His-102. Substrate-binding positions include 102–105 (HVSQ), 231–232 (RF), 258–261 (HLSE), and Asp-348. Zn(2+) is bound by residues His-258 and Asp-348.

It belongs to the metallo-dependent hydrolases superfamily. ATZ/TRZ family. The cofactor is Zn(2+).

It is found in the cytoplasm. The enzyme catalyses guanine + H2O + H(+) = xanthine + NH4(+). The protein operates within purine metabolism; guanine degradation; xanthine from guanine: step 1/1. Functionally, catalyzes the hydrolytic deamination of guanine, producing xanthine and ammonia. The polypeptide is Probable guanine deaminase (GUD1) (Saccharomyces cerevisiae (strain ATCC 204508 / S288c) (Baker's yeast)).